The primary structure comprises 342 residues: DNA-directed RNA polymerase subunit alpha (342 aa).

Positions 1–239 (MTTFLAKNWS…DQLQVFINFQ (239 aa)) are alpha N-terminal domain (alpha-NTD). The tract at residues 254–342 (INPVLLKKVY…SLAKKHEDQY (89 aa)) is alpha C-terminal domain (alpha-CTD).

This sequence belongs to the RNA polymerase alpha chain family. As to quaternary structure, homodimer. The RNAP catalytic core consists of 2 alpha, 1 beta, 1 beta' and 1 omega subunit. When a sigma factor is associated with the core the holoenzyme is formed, which can initiate transcription.

The enzyme catalyses RNA(n) + a ribonucleoside 5'-triphosphate = RNA(n+1) + diphosphate. DNA-dependent RNA polymerase catalyzes the transcription of DNA into RNA using the four ribonucleoside triphosphates as substrates. The polypeptide is DNA-directed RNA polymerase subunit alpha (Orientia tsutsugamushi (strain Boryong) (Rickettsia tsutsugamushi)).